Consider the following 363-residue polypeptide: MKYRLIVALAMLVLSLPSQAERIKDIANVQGVRSNQLIGYGLVVGLPGTGEKTNYTEQTFTTMLKNFGINLPDNFRPKIKNVAVVAVHADMPAFIKPGQQLDVTVSSLGEAKSLRGGTLLQTFLKGVDGNVYAIAQGSLVVSGFSAEGLDGSKVIQNTPTVGRIPNGAIVERSVATPFSSGDYLTFNLRRADFSTAQRMADAINDLLGPDMARPLDATSVQVSAPRDVSQRVSFLATLENLDVIPAEESAKVIVNSRTGTIVVGQHVKLLPAAVTHGGLTVTIAEATQVSQPNALANGETVVTANTTIGVNESDRRMFMFSPGTTLDELVRAVNLVGAAPSDVLAILEALKVAGALHGELIII.

Positions 1–20 (MKYRLIVALAMLVLSLPSQA) are cleaved as a signal peptide.

The protein belongs to the FlgI family. The basal body constitutes a major portion of the flagellar organelle and consists of four rings (L,P,S, and M) mounted on a central rod.

It localises to the periplasm. The protein resides in the bacterial flagellum basal body. Assembles around the rod to form the L-ring and probably protects the motor/basal body from shearing forces during rotation. This chain is Flagellar P-ring protein, found in Shewanella sp. (strain ANA-3).